The sequence spans 209 residues: Ribosomal RNA large subunit methyltransferase E (209 aa).

G63, W65, D83, D99, and D124 together coordinate S-adenosyl-L-methionine. K164 functions as the Proton acceptor in the catalytic mechanism.

Belongs to the class I-like SAM-binding methyltransferase superfamily. RNA methyltransferase RlmE family.

The protein resides in the cytoplasm. It carries out the reaction uridine(2552) in 23S rRNA + S-adenosyl-L-methionine = 2'-O-methyluridine(2552) in 23S rRNA + S-adenosyl-L-homocysteine + H(+). In terms of biological role, specifically methylates the uridine in position 2552 of 23S rRNA at the 2'-O position of the ribose in the fully assembled 50S ribosomal subunit. The polypeptide is Ribosomal RNA large subunit methyltransferase E (Shewanella woodyi (strain ATCC 51908 / MS32)).